The primary structure comprises 566 residues: Tissue-type plasminogen activator (566 aa).

The first 21 residues, 1 to 21, serve as a signal peptide directing secretion; the sequence is MMSAMKTEFLCVLLLCGAVFT. A propeptide spanning residues 22–33 is cleaved from the precursor; sequence SPSQETYRRLRR. Positions 34–36 are cleaved as a propeptide — removed by plasmin; that stretch reads GAR. In terms of domain architecture, Fibronectin type-I spans 40 to 82; the sequence is VTCRDGKTQMTYRQHDSWLRPLLRGNQVEHCWCDGGRAQCHSV. 17 cysteine pairs are disulfide-bonded: C42–C72, C70–C79, C87–C98, C92–C109, C111–C120, C128–C209, C149–C191, C180–C204, C219–C300, C240–C282, C271–C295, C303–C434, C346–C362, C354–C423, C448–C523, C480–C496, and C513–C541. The interval 43 to 53 is important for binding to annexin A2; sequence RDGKTQMTYRQ. The 39-residue stretch at 83–121 folds into the EGF-like domain; that stretch reads PVRSCSEPWCFNGGTCRQALYSSDFVCQCPEGFMGKLCE. Kringle domains lie at 128-209 and 219-300; these read CYKD…TPAC and CYTG…VPQC. N153 carries N-linked (GlcNAc...) asparagine glycosylation. The 251-residue stretch at 315 to 565 folds into the Peptidase S1 domain; sequence IKGGLFADIT…YLDWIRDNTR (251 aa). Catalysis depends on charge relay system residues H361 and D410. The N-linked (GlcNAc...) asparagine glycan is linked to N487. The active-site Charge relay system is the S517.

The protein belongs to the peptidase S1 family. As to quaternary structure, heterodimer of chain A and chain B held by a disulfide bond. Binds to fibrin with high affinity. This interaction leads to an increase in the catalytic efficiency of the enzyme due to an increase in affinity for plasminogen. Similarly, binding to heparin increases the activation of plasminogen. Binds to annexin A2, cytokeratin-8, fibronectin and laminin. Binds to mannose receptor and the low-density lipoprotein receptor-related protein (LRP1); these proteins are involved in TPA clearance. Binds LRP1B; binding is followed by internalization and degradation. Forms heterodimer with SERPINA5. Interacts with SERPINE1. In complex with SERPINE1, interacts with SORL1. Post-translationally, the single chain, almost fully active enzyme, can be further processed into a two-chain fully active form by a cleavage after Arg-314 catalyzed by plasmin, tissue kallikrein or factor Xa.

Its subcellular location is the secreted. It is found in the extracellular space. The enzyme catalyses Specific cleavage of Arg-|-Val bond in plasminogen to form plasmin.. Its activity is regulated as follows. Inhibited by SERPINA5. Inhibited by SERPINE1. In terms of biological role, converts the abundant, but inactive, zymogen plasminogen to plasmin by hydrolyzing a single Arg-Val bond in plasminogen. By controlling plasmin-mediated proteolysis, it plays an important role in tissue remodeling and degradation, in cell migration and many other physiopathological events. During oocyte activation, plays a role in cortical granule reaction in the zona reaction, which contributes to the block to polyspermy. This Bos taurus (Bovine) protein is Tissue-type plasminogen activator (PLAT).